A 367-amino-acid polypeptide reads, in one-letter code: Phospho-N-acetylmuramoyl-pentapeptide-transferase (367 aa).

10 helical membrane passes run alanine 30–leucine 50, leucine 71–alanine 91, threonine 94–isoleucine 114, isoleucine 138–methionine 158, leucine 169–serine 189, glycine 200–alanine 220, glycine 237–phenylalanine 257, isoleucine 264–leucine 284, leucine 289–valine 309, and lysine 344–leucine 364.

It belongs to the glycosyltransferase 4 family. MraY subfamily. It depends on Mg(2+) as a cofactor.

Its subcellular location is the cell inner membrane. The catalysed reaction is UDP-N-acetyl-alpha-D-muramoyl-L-alanyl-gamma-D-glutamyl-meso-2,6-diaminopimeloyl-D-alanyl-D-alanine + di-trans,octa-cis-undecaprenyl phosphate = di-trans,octa-cis-undecaprenyl diphospho-N-acetyl-alpha-D-muramoyl-L-alanyl-D-glutamyl-meso-2,6-diaminopimeloyl-D-alanyl-D-alanine + UMP. Its pathway is cell wall biogenesis; peptidoglycan biosynthesis. Functionally, catalyzes the initial step of the lipid cycle reactions in the biosynthesis of the cell wall peptidoglycan: transfers peptidoglycan precursor phospho-MurNAc-pentapeptide from UDP-MurNAc-pentapeptide onto the lipid carrier undecaprenyl phosphate, yielding undecaprenyl-pyrophosphoryl-MurNAc-pentapeptide, known as lipid I. In Chlorobium phaeovibrioides (strain DSM 265 / 1930) (Prosthecochloris vibrioformis (strain DSM 265)), this protein is Phospho-N-acetylmuramoyl-pentapeptide-transferase.